A 948-amino-acid polypeptide reads, in one-letter code: MKEPSIVVKGARAHNLKDIDIELPKNKLIVMTGLSGSGKSSLAFDTIYAEGQRRYVESLSAYARQFLGQMDKPDVDTIEGLSPAISIDQKTTSKNPRSTVATVTEIYDYIRLLYARVGKPYCPNHNIEIESQTVQQMVDRIMELEARTKIQLLAPVIAHRKGSHEKLIEDIGKKGYVRLRIDGEIVDVNDVPTLDKNKNHTIEVVVDRLVVKDGIETRLADSIETALELSEGQLTVDVIDGEDLKFSESHACPICGFSIGELEPRMFSFNSPFGACPTCDGLGQKLTVDVDLVVPDKDKTLNEGAIEPWIPTSSDFYPTLLKRVCEVYKINMDKPFKKLTERQRDILLYGSGDKEIEFTFTQRQGGTRKRTMVFEGVVPNISRRFHESPSEYTREMMSKYMTELPCETCHGKRLSREALSVYVGGLNIGEVVEYSISQALNYYKNINLSEQDQAIANQILKEIISRLTFLNNVGLEYLTLNRASGTLSGGEAQRIRLATQIGSRLTGVLYVLDEPSIGLHQRDNDRLINTLKEMRDLGNTLIVVEHDDDTMRAADYLVDIGPGAGEHGGQIVSSGTPQKVMKDKKSLTGQYLSGKKRIEVPEYRRPASDRKISIRGARSNNLKGVDVDIPLSIMTVVTGVSGSGKSSLVNEVLYKSLAQKINKSKVKPGLYDKIEGIDQLDKIIDIDQSPIGRTPRSNPATYTGVFDDIRDVFAQTNEAKIRGYQKGRFSFNVKGGRCEACKGDGIIKIEMHFLPDVYVPCEVCDGKRYNRETLEVTYKGKNIADILEMTVEEATQFFENIPKIKRKLQTLVDVGLGYVTLGQQATTLSGGEAQRVKLASELHKRSTGKSIYILDEPTTGLHVDDISRLLKVLNRLVENGDTVVIIEHNLDVIKTADYIIDLGPEGGSGGGTIVATGTPEDIAQTKSSYTGKYLKEVLERDKQNTEDK.

33–40 is a binding site for ATP; the sequence is GLSGSGKS. A C4-type zinc finger spans residues 252 to 279; it reads CPICGFSIGELEPRMFSFNSPFGACPTC. ABC transporter domains lie at 309–587 and 607–935; these read WIPT…KKSL and ASDR…KYLK. 639–646 is an ATP binding site; the sequence is GVSGSGKS. The segment at 738 to 764 adopts a C4-type zinc-finger fold; that stretch reads CEACKGDGIIKIEMHFLPDVYVPCEVC.

This sequence belongs to the ABC transporter superfamily. UvrA family. As to quaternary structure, forms a heterotetramer with UvrB during the search for lesions.

It localises to the cytoplasm. The UvrABC repair system catalyzes the recognition and processing of DNA lesions. UvrA is an ATPase and a DNA-binding protein. A damage recognition complex composed of 2 UvrA and 2 UvrB subunits scans DNA for abnormalities. When the presence of a lesion has been verified by UvrB, the UvrA molecules dissociate. The chain is UvrABC system protein A from Staphylococcus aureus (strain MRSA252).